Consider the following 230-residue polypeptide: Orotidine 5'-phosphate decarboxylase (230 aa).

Substrate contacts are provided by residues aspartate 11, lysine 34, 61-70 (DLKLHDIPNT), threonine 117, arginine 179, glutamine 188, glycine 208, and arginine 209. Lysine 63 functions as the Proton donor in the catalytic mechanism.

Belongs to the OMP decarboxylase family. Type 1 subfamily. Homodimer.

The catalysed reaction is orotidine 5'-phosphate + H(+) = UMP + CO2. Its pathway is pyrimidine metabolism; UMP biosynthesis via de novo pathway; UMP from orotate: step 2/2. In terms of biological role, catalyzes the decarboxylation of orotidine 5'-monophosphate (OMP) to uridine 5'-monophosphate (UMP). This is Orotidine 5'-phosphate decarboxylase from Streptococcus equi subsp. zooepidemicus (strain MGCS10565).